Consider the following 337-residue polypeptide: Formamidase (337 aa).

The 244-residue stretch at 14 to 257 (VVIGLVQLQL…DEIITAEVRP (244 aa)) folds into the CN hydrolase domain. Glu-60 serves as the catalytic Proton acceptor. The Proton donor role is filled by Lys-129. The active-site Nucleophile is Cys-162.

Belongs to the carbon-nitrogen hydrolase superfamily. Aliphatic amidase family.

It carries out the reaction formamide + H2O = formate + NH4(+). Its function is as follows. Is an aliphatic amidase with a restricted substrate specificity, as it only hydrolyzes formamide. The polypeptide is Formamidase (Bradyrhizobium sp. (strain ORS 278)).